We begin with the raw amino-acid sequence, 166 residues long: Ureidoglycolate lyase (166 aa).

This sequence belongs to the ureidoglycolate lyase family. In terms of assembly, homodimer. It depends on Ni(2+) as a cofactor.

It carries out the reaction (S)-ureidoglycolate = urea + glyoxylate. Its pathway is nitrogen metabolism; (S)-allantoin degradation. Catalyzes the catabolism of the allantoin degradation intermediate (S)-ureidoglycolate, generating urea and glyoxylate. Involved in the utilization of allantoin as nitrogen source. This is Ureidoglycolate lyase from Rhizobium leguminosarum bv. trifolii (strain WSM2304).